The chain runs to 167 residues: uncharacterized protein (167 aa).

DED domains lie at Asp2–Gln75 and Thr93–Val167.

This is an uncharacterized protein from Saimiriine herpesvirus 2 (strain 11) (SaHV-2).